Reading from the N-terminus, the 232-residue chain is Endonuclease V (232 aa).

Asp-43 and Asp-109 together coordinate Mg(2+).

The protein belongs to the endonuclease V family. Mg(2+) serves as cofactor.

The protein localises to the cytoplasm. The catalysed reaction is Endonucleolytic cleavage at apurinic or apyrimidinic sites to products with a 5'-phosphate.. Its function is as follows. DNA repair enzyme involved in the repair of deaminated bases. Selectively cleaves double-stranded DNA at the second phosphodiester bond 3' to a deoxyinosine leaving behind the intact lesion on the nicked DNA. This is Endonuclease V from Thermofilum pendens (strain DSM 2475 / Hrk 5).